A 91-amino-acid chain; its full sequence is Probable Fe(2+)-trafficking protein (91 aa).

This sequence belongs to the Fe(2+)-trafficking protein family.

Could be a mediator in iron transactions between iron acquisition and iron-requiring processes, such as synthesis and/or repair of Fe-S clusters in biosynthetic enzymes. The chain is Probable Fe(2+)-trafficking protein from Histophilus somni (strain 129Pt) (Haemophilus somnus).